Consider the following 194-residue polypeptide: Adenylate kinase isoenzyme 1 (194 aa).

Methionine 1 is subject to N-acetylmethionine. ATP is bound at residue 18–23 (GSGKGT). A Phosphoserine modification is found at serine 38. Residues 38-67 (STGDLLRAEVSSGSARGKMLSEIMEKGQLV) are NMP. Residues threonine 39, arginine 44, 65 to 67 (QLV), 94 to 97 (GYPR), and glutamine 101 each bind AMP. The LID stretch occupies residues 131 to 141 (KRGETSGRVDD). Position 132 (arginine 132) interacts with ATP. Residues arginine 138 and arginine 149 each coordinate AMP. Position 177 (glycine 177) interacts with ATP.

It belongs to the adenylate kinase family. AK1 subfamily. As to quaternary structure, monomer. Mg(2+) is required as a cofactor.

The protein localises to the cytoplasm. The catalysed reaction is a ribonucleoside 5'-phosphate + ATP = a ribonucleoside 5'-diphosphate + ADP. It carries out the reaction AMP + ATP = 2 ADP. It catalyses the reaction dAMP + ATP = dADP + ADP. The enzyme catalyses dATP + AMP = dADP + ADP. The catalysed reaction is dAMP + dATP = 2 dADP. It carries out the reaction a 2'-deoxyribonucleoside 5'-diphosphate + ATP = a 2'-deoxyribonucleoside 5'-triphosphate + ADP. It catalyses the reaction a ribonucleoside 5'-diphosphate + ATP = a ribonucleoside 5'-triphosphate + ADP. The enzyme catalyses CDP + GTP = CTP + GDP. The catalysed reaction is GDP + ATP = GTP + ADP. It carries out the reaction UDP + ATP = UTP + ADP. It catalyses the reaction GTP + UDP = UTP + GDP. The enzyme catalyses dTDP + GTP = dTTP + GDP. The catalysed reaction is dCDP + GTP = dCTP + GDP. It carries out the reaction dGDP + ATP = dGTP + ADP. It catalyses the reaction dADP + GTP = dATP + GDP. The enzyme catalyses thiamine diphosphate + ADP = thiamine triphosphate + AMP. In terms of biological role, catalyzes the reversible transfer of the terminal phosphate group between ATP and AMP. Also displays broad nucleoside diphosphate kinase activity. Plays an important role in cellular energy homeostasis and in adenine nucleotide metabolism. Also catalyzes at a very low rate the synthesis of thiamine triphosphate (ThTP) from thiamine diphosphate (ThDP) and ADP. In Bos taurus (Bovine), this protein is Adenylate kinase isoenzyme 1.